The following is a 273-amino-acid chain: Elongation factor Ts (273 aa).

The tract at residues 79 to 82 (TDFV) is involved in Mg(2+) ion dislocation from EF-Tu.

This sequence belongs to the EF-Ts family.

The protein resides in the cytoplasm. Functionally, associates with the EF-Tu.GDP complex and induces the exchange of GDP to GTP. It remains bound to the aminoacyl-tRNA.EF-Tu.GTP complex up to the GTP hydrolysis stage on the ribosome. The sequence is that of Elongation factor Ts from Hydrogenobaculum sp. (strain Y04AAS1).